Consider the following 715-residue polypeptide: Fatty acid oxidation complex subunit alpha (715 aa).

The enoyl-CoA hydratase stretch occupies residues 1–190 (MDMTSAFTLN…RVGLVDEVVP (190 aa)). The segment at 306–715 (GPLASVGVLG…WNSGETDLKE (410 aa)) is 3-hydroxyacyl-CoA dehydrogenase.

It in the N-terminal section; belongs to the enoyl-CoA hydratase/isomerase family. The protein in the central section; belongs to the 3-hydroxyacyl-CoA dehydrogenase family. Heterotetramer of two alpha chains (FadJ) and two beta chains (FadI).

Its subcellular location is the cytoplasm. The enzyme catalyses a (3S)-3-hydroxyacyl-CoA = a (2E)-enoyl-CoA + H2O. It catalyses the reaction a 4-saturated-(3S)-3-hydroxyacyl-CoA = a (3E)-enoyl-CoA + H2O. It carries out the reaction a (3S)-3-hydroxyacyl-CoA + NAD(+) = a 3-oxoacyl-CoA + NADH + H(+). The catalysed reaction is (3S)-3-hydroxybutanoyl-CoA = (3R)-3-hydroxybutanoyl-CoA. Its pathway is lipid metabolism; fatty acid beta-oxidation. Catalyzes the formation of a hydroxyacyl-CoA by addition of water on enoyl-CoA. Also exhibits 3-hydroxyacyl-CoA epimerase and 3-hydroxyacyl-CoA dehydrogenase activities. This Citrobacter koseri (strain ATCC BAA-895 / CDC 4225-83 / SGSC4696) protein is Fatty acid oxidation complex subunit alpha.